The primary structure comprises 491 residues: Protein translocase subunit SecY (491 aa).

The Cytoplasmic segment spans residues 1 to 20 (MGWKEAAAPVLTRMPAVERP). Residues 21 to 47 (EGHVPFRRKMYWTGGVLVLYFFLTNVP) form a helical membrane-spanning segment. Topologically, residues 48 to 58 (LWGIQTAGNDF) are extracellular. Residues 59–66 (FGQFRSLL) constitute an intramembrane region (helical). A discontinuously helical membrane pass occupies residues 59–87 (FGQFRSLLAGGQGTVLQLGIGPIVTASIV). An intramembrane segment occupies 67 to 78 (AGGQGTVLQLGI). Positions 79–87 (GPIVTASIV) form an intramembrane region, helical. At 88 to 109 (LQLLGGANLLGLDTDNDPRDQA) the chain is on the cytoplasmic side. Residues 110 to 134 (IYQGLQKFLVGVMVVLTGAPMVFLG) form a helical membrane-spanning segment. At 135 to 152 (NFLQPSQQLAQSMPGGAF) the chain is on the extracellular side. The chain crosses the membrane as a helical span at residues 153 to 177 (GVEVLIFAQIAAGGILLLFMDEVIS). Residues 178 to 183 (KWGVGS) lie on the Cytoplasmic side of the membrane. A helical transmembrane segment spans residues 184–202 (GIGLFIVAGVSQSLVGGLV). Residues 203–244 (FWEGGVGSQGLLPTWFDIIVGNVSNMPPLLSGSGIEFLLMQA) are Extracellular-facing. The chain crosses the membrane as a helical span at residues 245 to 266 (GILGLLTTLFIYVVVVYAESVR). Residues 267–291 (VEIPLSHARVKGARGRFPVKLIYAS) are Cytoplasmic-facing. The helical transmembrane segment at 292–313 (VLPMILVRALQANIQFLGQILN) threads the bilayer. Over 314 to 365 (STLASMPTWLGVYGGNGQVTGGLFYYLAPIYSPNAWMWWTSGATAARWQVLI) the chain is Extracellular. Residues 366 to 385 (RIAIDLSFMIIGGAIFAIFW) form a helical membrane-spanning segment. The Cytoplasmic portion of the chain corresponds to 386 to 428 (VETADMGPDATARQIQNSGMQIPGFRKNQGVIEKVMERYIPQV). A helical transmembrane segment spans residues 429 to 447 (TVIGGALVGLLAVMANMLG). Residues 448–452 (TIGNV) are Extracellular-facing. The chain crosses the membrane as a helical span at residues 453-467 (SGTGLLLTISITYKL). Topologically, residues 468-491 (YEEIAEEQMMEMHPMMREMFGGGD) are cytoplasmic.

It belongs to the SecY/SEC61-alpha family. In terms of assembly, component of the Sec protein translocase complex. Heterotrimer consisting of alpha (SecY), beta (SecG) and gamma (SecE) subunits. The heterotrimers can form oligomers, although 1 heterotrimer is thought to be able to translocate proteins. Interacts with the ribosome. May interact with SecDF, and other proteins may be involved.

The protein resides in the cell membrane. The central subunit of the protein translocation channel SecYEG. Consists of two halves formed by TMs 1-5 and 6-10. These two domains form a lateral gate at the front which open onto the bilayer between TMs 2 and 7, and are clamped together by SecE at the back. The channel is closed by both a pore ring composed of hydrophobic SecY resides and a short helix (helix 2A) on the extracellular side of the membrane which forms a plug. The plug probably moves laterally to allow the channel to open. The ring and the pore may move independently. In Halobacterium salinarum (strain ATCC 700922 / JCM 11081 / NRC-1) (Halobacterium halobium), this protein is Protein translocase subunit SecY.